The sequence spans 458 residues: Protein TESPA1 (458 aa).

The residue at position 312 (Ser-312) is a Phosphoserine. Positions 328–339 (KIQQDPEHRQAL) are enriched in basic and acidic residues. Disordered stretches follow at residues 328 to 356 (KIQQ…STSS) and 439 to 458 (LPTI…LTNL). 2 stretches are compositionally biased toward polar residues: residues 346-356 (PIQNTNPSTSS) and 439-450 (LPTIQQKQNQGQ).

As to quaternary structure, interacts with PLCG1 and GRB2; the association is increased with prolonged stimulation of the TCR and may facilitate the assembly of the LAT signalosome. Interacts with ITPR1 and ITPR3. Interacts with HSPA9. May be phosphorylated in response to store-operated Ca(+2) entry. Expressed in lymphoid tissues, with highest expression levels detected in thymus and lower levels in spleen and lymph nodes (at protein level). Detected in CD4(+) and CD8(+) T-cells, B-cells and mast cells. Not detected in monocytes/macrophages.

The protein localises to the cytoplasm. The protein resides in the endoplasmic reticulum membrane. Functionally, may play a role in the regulation of inositol 1,4,5-trisphosphate receptor-mediated Ca(2+) release and mitochondrial Ca(2+) uptake via the mitochondria-associated endoplasmic reticulum membrane (MAM) compartment. Required for the development and maturation of T-cells, its function being essential for the late stages of thymocyte development. Plays a role in T-cell antigen receptor (TCR)-mediated activation of the ERK and NFAT signaling pathways, possibly by serving as a scaffolding protein that promotes the assembly of the LAT signalosome in thymocytes. The chain is Protein TESPA1 (Tespa1) from Mus musculus (Mouse).